The primary structure comprises 520 residues: Cytochrome P450 315a1, mitochondrial (520 aa).

C466 provides a ligand contact to heme.

It belongs to the cytochrome P450 family. It depends on heme as a cofactor. As to expression, complex coexpression pattern of dib (disembodied) and sad (shade) in the early embryo that restricts to the prothoracic gland cells of the developing ring gland during late embryogenesis. In larvae and adult, coexpression is seen in prothoracic gland and follicle cells of the ovary. In adults, coexpression is seen in the follicle cells, sad only is expressed in nurse cells.

It localises to the mitochondrion membrane. The catalysed reaction is 2-deoxyecdysone + 2 reduced [adrenodoxin] + O2 + 2 H(+) = ecdysone + 2 oxidized [adrenodoxin] + H2O. The enzyme catalyses 2,22-dideoxyecdysone + 2 reduced [adrenodoxin] + O2 + 2 H(+) = 22-deoxyecdysone + 2 oxidized [adrenodoxin] + H2O. It functions in the pathway steroid biosynthesis; ecdysteroid biosynthesis. Functionally, required for CNS development: midline glial cells. Involved in the metabolism of insect hormones: responsible for ecdysteroid C2-hydroxylase activity. May be involved in the breakdown of synthetic insecticides. This is Cytochrome P450 315a1, mitochondrial from Drosophila melanogaster (Fruit fly).